Here is a 204-residue protein sequence, read N- to C-terminus: Synaptosomal-associated protein 25-A (204 aa).

Positions 1-11 (MAEDADMRNEL) are enriched in basic and acidic residues. The interval 1-25 (MAEDADMRNELSDMQQRADQLADES) is disordered. 2 t-SNARE coiled-coil homology domains span residues 19-81 (DQLA…LNDL) and 138-200 (DARE…ATKM).

The protein belongs to the SNAP-25 family.

It localises to the synapse. The protein localises to the synaptosome. Its subcellular location is the cell membrane. Functionally, may play an important role in the synaptic function of specific neuronal systems. Associates with proteins involved in vesicle docking and membrane fusion. This chain is Synaptosomal-associated protein 25-A (snap25a), found in Carassius auratus (Goldfish).